Consider the following 359-residue polypeptide: UPF0283 membrane protein Atu1356 (359 aa).

Residues 1–39 form a disordered region; it reads MKAPTQNDPQTRRPAAFTLETEEAARPSATQKRAPRSFD. The next 2 membrane-spanning stretches (helical) occupy residues 75 to 95 and 108 to 128; these read FGKL…GLWA and WLGY…LALV.

Belongs to the UPF0283 family.

The protein localises to the cell inner membrane. This Agrobacterium fabrum (strain C58 / ATCC 33970) (Agrobacterium tumefaciens (strain C58)) protein is UPF0283 membrane protein Atu1356.